A 245-amino-acid chain; its full sequence is MIIPAIDLIEGQVVRLYQGDYNQKTTFNLSPLEQLQSYQEQGADLLHIVDLTGAKDPMKRQTQLIASLVRELDTPIQVGGGVRTEAQLSELLEIGVSRVVIGSLAVKEPELVKSWFVKYGSDAICLALDVNINDQGEKIVAVSGWQSGGGKTLESLVAEFSTVGLKHALVTDISRDGTLKGANTELYQEISTAYPEINWQASGGIATLADVNAVKESGANGIIIGKALLINQFTVEEAITCWPNA.

Asp-7 acts as the Proton acceptor in catalysis. The Proton donor role is filled by Asp-129.

This sequence belongs to the HisA/HisF family.

It is found in the cytoplasm. It catalyses the reaction 1-(5-phospho-beta-D-ribosyl)-5-[(5-phospho-beta-D-ribosylamino)methylideneamino]imidazole-4-carboxamide = 5-[(5-phospho-1-deoxy-D-ribulos-1-ylimino)methylamino]-1-(5-phospho-beta-D-ribosyl)imidazole-4-carboxamide. It functions in the pathway amino-acid biosynthesis; L-histidine biosynthesis; L-histidine from 5-phospho-alpha-D-ribose 1-diphosphate: step 4/9. The chain is 1-(5-phosphoribosyl)-5-[(5-phosphoribosylamino)methylideneamino] imidazole-4-carboxamide isomerase from Shewanella piezotolerans (strain WP3 / JCM 13877).